Reading from the N-terminus, the 130-residue chain is Small ribosomal subunit protein uS11 (130 aa).

It belongs to the universal ribosomal protein uS11 family. As to quaternary structure, part of the 30S ribosomal subunit. Interacts with proteins S7 and S18. Binds to IF-3.

Its function is as follows. Located on the platform of the 30S subunit, it bridges several disparate RNA helices of the 16S rRNA. Forms part of the Shine-Dalgarno cleft in the 70S ribosome. This chain is Small ribosomal subunit protein uS11, found in Aliarcobacter butzleri (strain RM4018) (Arcobacter butzleri).